A 745-amino-acid chain; its full sequence is Interleukin-17 receptor D (745 aa).

The first 26 residues, 1 to 26 (MAGSRRLAHFFMASCLFLCYTASVNG), serve as a signal peptide directing secretion. At 27-298 (GKRGNSDKCS…VHSPWAGPIR (272 aa)) the chain is on the extracellular side. Residues N61, N79, N136, N170, N205, and N276 are each glycosylated (N-linked (GlcNAc...) asparagine). Residues 299–319 (AMAITVPLVIMSAFATLFTVM) form a helical membrane-spanning segment. Residues 320 to 745 (CRKKQQENIY…SEGLIAAAST (426 aa)) are Cytoplasmic-facing. One can recognise an SEFIR domain in the interval 354 to 518 (RPKIFICYSS…LMDQLPQLFA (165 aa)). Disordered stretches follow at residues 432-454 (RHRK…DSSS) and 631-713 (REDL…PPAV). Residues 439 to 448 (TSKEKNREPS) show a composition bias toward basic and acidic residues. A compositionally biased stretch (low complexity) spans 693–705 (SSLADSVSSSSGL).

In terms of assembly, interacts with fgfr1 and fgfr2.

The protein resides in the membrane. Its function is as follows. Feedback inhibitor of fibroblast growth factor mediated Ras-MAPK signaling and ERK activation. May inhibit FGF-induced FGFR1 tyrosine phosphorylation. This is Interleukin-17 receptor D (il17rd) from Danio rerio (Zebrafish).